Reading from the N-terminus, the 460-residue chain is A-type ATP synthase subunit B (460 aa).

It belongs to the ATPase alpha/beta chains family. Has multiple subunits, A(3), B(3), C, D, E, F, G, I and K(x); there may be a few other subunits as well.

The protein resides in the cell membrane. Its function is as follows. Component of the A-type ATP synthase that produces ATP from ADP in the presence of a proton gradient across the membrane. The B chain is a regulatory subunit. The polypeptide is A-type ATP synthase subunit B (Methanosarcina mazei (strain ATCC BAA-159 / DSM 3647 / Goe1 / Go1 / JCM 11833 / OCM 88) (Methanosarcina frisia)).